A 109-amino-acid chain; its full sequence is ATP-dependent Clp protease adapter protein ClpS (109 aa).

The protein belongs to the ClpS family. Binds to the N-terminal domain of the chaperone ClpA.

Involved in the modulation of the specificity of the ClpAP-mediated ATP-dependent protein degradation. In Lawsonia intracellularis (strain PHE/MN1-00), this protein is ATP-dependent Clp protease adapter protein ClpS.